Here is a 165-residue protein sequence, read N- to C-terminus: Large ribosomal subunit protein uL15 (165 aa).

A disordered region spans residues 1 to 44 (MSLNQLKAPRGANRAKKRVGRGQGSGLGKTAGRGGKGQKARSGN). Residues 21 to 37 (RGQGSGLGKTAGRGGKG) are compositionally biased toward gly residues.

The protein belongs to the universal ribosomal protein uL15 family. Part of the 50S ribosomal subunit.

Functionally, binds to the 23S rRNA. The chain is Large ribosomal subunit protein uL15 from Anaeromyxobacter dehalogenans (strain 2CP-1 / ATCC BAA-258).